Reading from the N-terminus, the 256-residue chain is MRAYRDQHFLTDPRIVARIADILDISGRIVLEIGPGEGILTEALLERGARVISVELDRTLIERLSRRFASEIADGSLTLLQGDAVKVPLPPFEIVMANLPYSISSPITFRLLDIGFEAAILMYQKEFADRMMAHPGTRDCGRLSIMLQTYARANRCFDLPPGAFSPPPAVRSTVMWIEPREPLFPIHDRKIYEDLVRELFTRRRKTVQSTLKALAGMFGKEKIDSVVRDLNPEILSSRPEALYLEDFATISNQLSS.

His8, Leu10, Gly34, Glu55, Asp83, and Asn98 together coordinate S-adenosyl-L-methionine.

It belongs to the class I-like SAM-binding methyltransferase superfamily. rRNA adenine N(6)-methyltransferase family. RsmA subfamily.

It is found in the cytoplasm. Its function is as follows. Specifically dimethylates two adjacent adenosines in the loop of a conserved hairpin near the 3'-end of 16S rRNA in the 30S particle. May play a critical role in biogenesis of 30S subunits. The polypeptide is Probable ribosomal RNA small subunit methyltransferase A (Methanospirillum hungatei JF-1 (strain ATCC 27890 / DSM 864 / NBRC 100397 / JF-1)).